The primary structure comprises 353 residues: Phosphate acyltransferase (353 aa).

Belongs to the PlsX family. Homodimer. Probably interacts with PlsY.

Its subcellular location is the cytoplasm. The catalysed reaction is a fatty acyl-[ACP] + phosphate = an acyl phosphate + holo-[ACP]. It functions in the pathway lipid metabolism; phospholipid metabolism. In terms of biological role, catalyzes the reversible formation of acyl-phosphate (acyl-PO(4)) from acyl-[acyl-carrier-protein] (acyl-ACP). This enzyme utilizes acyl-ACP as fatty acyl donor, but not acyl-CoA. The sequence is that of Phosphate acyltransferase from Ralstonia pickettii (strain 12J).